A 506-amino-acid chain; its full sequence is Protein MGF 505-9R (506 aa).

It belongs to the asfivirus MGF 505 family.

Its function is as follows. Plays a role in virus cell tropism, and may be required for efficient virus replication in macrophages. The chain is Protein MGF 505-9R from Ornithodoros (relapsing fever ticks).